The sequence spans 308 residues: Tryptophan 2,3-dioxygenase (308 aa).

A disordered region spans residues 1-35 (MQPPGDNAPAGCPFSGAHAAQPAHEAPHVPGDAAG). The span at 17–30 (AHAAQPAHEAPHVP) shows a compositional bias: low complexity. Substrate-binding positions include 77–81 (FIIQH), Y139, and R143. H266 serves as a coordination point for heme. Substrate is bound at residue T280.

This sequence belongs to the tryptophan 2,3-dioxygenase family. In terms of assembly, homotetramer. Heme serves as cofactor.

The catalysed reaction is L-tryptophan + O2 = N-formyl-L-kynurenine. Its pathway is amino-acid degradation; L-tryptophan degradation via kynurenine pathway; L-kynurenine from L-tryptophan: step 1/2. In terms of biological role, heme-dependent dioxygenase that catalyzes the oxidative cleavage of the L-tryptophan (L-Trp) pyrrole ring and converts L-tryptophan to N-formyl-L-kynurenine. Catalyzes the oxidative cleavage of the indole moiety. In Burkholderia ambifaria (strain ATCC BAA-244 / DSM 16087 / CCUG 44356 / LMG 19182 / AMMD) (Burkholderia cepacia (strain AMMD)), this protein is Tryptophan 2,3-dioxygenase.